The sequence spans 154 residues: Keratin-associated protein 9-9 (154 aa).

Tandem repeats lie at residues 8 to 12 (CCQPT), 13 to 17 (CCRTT), 18 to 22 (CCRTT), 37 to 41 (CCQPS), 42 to 46 (CCVSS), 51 to 55 (CCRPA), 56 to 60 (CCQNT), 61 to 65 (CCRTT), 66 to 70 (CCQPT), 75 to 79 (CCGQT), 124 to 128 (CCRPA), 129 to 133 (CCETT), 134 to 137 (CCRT), and 148 to 152 (CCQPS). The tract at residues 8–152 (CCQPTCCRTT…TCVSSCCQPS (145 aa)) is 14 X 5 AA repeats of C-C-[RQVGE]-[SPSTNQ]-[TASL].

This sequence belongs to the KRTAP type 9 family. In terms of assembly, interacts with hair keratins.

Its function is as follows. In the hair cortex, hair keratin intermediate filaments are embedded in an interfilamentous matrix, consisting of hair keratin-associated proteins (KRTAP), which are essential for the formation of a rigid and resistant hair shaft through their extensive disulfide bond cross-linking with abundant cysteine residues of hair keratins. The matrix proteins include the high-sulfur and high-glycine-tyrosine keratins. This chain is Keratin-associated protein 9-9 (KRTAP9-9), found in Homo sapiens (Human).